We begin with the raw amino-acid sequence, 256 residues long: tRNA (guanine-N(7)-)-methyltransferase (256 aa).

Residues glutamate 85, glutamate 110, aspartate 137, and aspartate 159 each contribute to the S-adenosyl-L-methionine site. Residue aspartate 159 is part of the active site. 2 residues coordinate substrate: lysine 163 and aspartate 195.

It belongs to the class I-like SAM-binding methyltransferase superfamily. TrmB family.

The catalysed reaction is guanosine(46) in tRNA + S-adenosyl-L-methionine = N(7)-methylguanosine(46) in tRNA + S-adenosyl-L-homocysteine. Its pathway is tRNA modification; N(7)-methylguanine-tRNA biosynthesis. Functionally, catalyzes the formation of N(7)-methylguanine at position 46 (m7G46) in tRNA. The polypeptide is tRNA (guanine-N(7)-)-methyltransferase (Rhodopseudomonas palustris (strain BisB5)).